The primary structure comprises 228 residues: Octanoyltransferase (228 aa).

The region spanning 31–212 is the BPL/LPL catalytic domain; that stretch reads GETDGILILL…KFSEVFGIHF (182 aa). Residues 76–83, 143–145, and 156–158 each bind substrate; these read RGGKITFH, AIG, and GIA. Catalysis depends on C174, which acts as the Acyl-thioester intermediate.

It belongs to the LipB family.

It localises to the cytoplasm. It carries out the reaction octanoyl-[ACP] + L-lysyl-[protein] = N(6)-octanoyl-L-lysyl-[protein] + holo-[ACP] + H(+). It participates in protein modification; protein lipoylation via endogenous pathway; protein N(6)-(lipoyl)lysine from octanoyl-[acyl-carrier-protein]: step 1/2. In terms of biological role, catalyzes the transfer of endogenously produced octanoic acid from octanoyl-acyl-carrier-protein onto the lipoyl domains of lipoate-dependent enzymes. Lipoyl-ACP can also act as a substrate although octanoyl-ACP is likely to be the physiological substrate. The sequence is that of Octanoyltransferase from Thermoanaerobacter sp. (strain X514).